A 266-amino-acid chain; its full sequence is Glutaconate CoA-transferase subunit B (266 aa).

Glutamate 54 is an active-site residue.

The protein belongs to the 3-oxoacid CoA-transferase subunit B family. As to quaternary structure, heterooctamer of four A and four B subunits.

The protein resides in the cytoplasm. It carries out the reaction trans-glutaconate + acetyl-CoA = (2E)-glutaconyl-CoA + acetate. It functions in the pathway amino-acid degradation; L-glutamate degradation via hydroxyglutarate pathway; crotonoyl-CoA from L-glutamate: step 3/5. Catalyzes the transfer of the CoA moiety from acetyl-CoA to (R)-2-hydroxyglutarate and related compounds like glutaconate. This chain is Glutaconate CoA-transferase subunit B (gctB), found in Acidaminococcus fermentans (strain ATCC 25085 / DSM 20731 / CCUG 9996 / CIP 106432 / VR4).